A 602-amino-acid polypeptide reads, in one-letter code: tRNA uridine 5-carboxymethylaminomethyl modification enzyme MnmG (602 aa).

10–15 (GGGHAG) provides a ligand contact to FAD. Residues 217 to 242 (DPQPRGFTGRPGPRAAESPTWQTHTT) form a disordered region. 267-281 (GPRYCPSIEDKVVRF) provides a ligand contact to NAD(+).

The protein belongs to the MnmG family. In terms of assembly, homodimer. Heterotetramer of two MnmE and two MnmG subunits. It depends on FAD as a cofactor.

The protein localises to the cytoplasm. NAD-binding protein involved in the addition of a carboxymethylaminomethyl (cmnm) group at the wobble position (U34) of certain tRNAs, forming tRNA-cmnm(5)s(2)U34. In Deinococcus geothermalis (strain DSM 11300 / CIP 105573 / AG-3a), this protein is tRNA uridine 5-carboxymethylaminomethyl modification enzyme MnmG.